Consider the following 440-residue polypeptide: D-serine dehydratase (440 aa).

Lys116 carries the N6-(pyridoxal phosphate)lysine modification.

This sequence belongs to the serine/threonine dehydratase family. DsdA subfamily. In terms of assembly, monomer. It depends on pyridoxal 5'-phosphate as a cofactor.

The catalysed reaction is D-serine = pyruvate + NH4(+). This Salmonella paratyphi A (strain ATCC 9150 / SARB42) protein is D-serine dehydratase.